The following is a 299-amino-acid chain: Putative arsenical pump-driving ATPase 2 (299 aa).

Residue 8–15 (GKGGVGKT) coordinates ATP.

It belongs to the arsA ATPase family.

The catalysed reaction is arsenite(in) + ATP + H2O = arsenite(out) + ADP + phosphate + H(+). Anion-transporting ATPase. Catalyzes the extrusion of arsenite. The protein is Putative arsenical pump-driving ATPase 2 (arsA2) of Aquifex aeolicus (strain VF5).